A 916-amino-acid chain; its full sequence is Protein translocase subunit SecA (916 aa).

Residues glutamine 87, glycine 105–threonine 109, and aspartate 512 contribute to the ATP site. The disordered stretch occupies residues glutamine 857–aspartate 916. Zn(2+) contacts are provided by cysteine 900, cysteine 902, cysteine 911, and histidine 912. A compositionally biased stretch (basic residues) spans lysine 906 to aspartate 916.

The protein belongs to the SecA family. As to quaternary structure, monomer and homodimer. Part of the essential Sec protein translocation apparatus which comprises SecA, SecYEG and auxiliary proteins SecDF-YajC and YidC. Requires Zn(2+) as cofactor.

Its subcellular location is the cell inner membrane. It localises to the cytoplasm. The enzyme catalyses ATP + H2O + cellular proteinSide 1 = ADP + phosphate + cellular proteinSide 2.. In terms of biological role, part of the Sec protein translocase complex. Interacts with the SecYEG preprotein conducting channel. Has a central role in coupling the hydrolysis of ATP to the transfer of proteins into and across the cell membrane, serving both as a receptor for the preprotein-SecB complex and as an ATP-driven molecular motor driving the stepwise translocation of polypeptide chains across the membrane. In Pseudomonas aeruginosa (strain UCBPP-PA14), this protein is Protein translocase subunit SecA.